Here is an 80-residue protein sequence, read N- to C-terminus: Exodeoxyribonuclease 7 small subunit (80 aa).

Belongs to the XseB family. In terms of assembly, heterooligomer composed of large and small subunits.

Its subcellular location is the cytoplasm. The catalysed reaction is Exonucleolytic cleavage in either 5'- to 3'- or 3'- to 5'-direction to yield nucleoside 5'-phosphates.. Bidirectionally degrades single-stranded DNA into large acid-insoluble oligonucleotides, which are then degraded further into small acid-soluble oligonucleotides. The chain is Exodeoxyribonuclease 7 small subunit from Cronobacter sakazakii (strain ATCC BAA-894) (Enterobacter sakazakii).